The chain runs to 201 residues: MQPFTTHTGLAVMIDSTNIDTDQIIPKQFLSKVTRDGFGVHLFHDWRYLDDAGDVPNPEFSLNQPRYKGASILVSQENFGCGSSREHAPWALADFGLRAIIAPSFADIFYGNSINNGLLPVALTHAQVRQLMDEVAAEEGAQITVDLTSCKVISPSGAEFSFTLAESARHKLLNGLDAIGLTLSHAAQISQYETQIQGWRS.

The protein belongs to the LeuD family. LeuD type 1 subfamily. As to quaternary structure, heterodimer of LeuC and LeuD.

It carries out the reaction (2R,3S)-3-isopropylmalate = (2S)-2-isopropylmalate. It participates in amino-acid biosynthesis; L-leucine biosynthesis; L-leucine from 3-methyl-2-oxobutanoate: step 2/4. Functionally, catalyzes the isomerization between 2-isopropylmalate and 3-isopropylmalate, via the formation of 2-isopropylmaleate. In Shewanella putrefaciens (strain CN-32 / ATCC BAA-453), this protein is 3-isopropylmalate dehydratase small subunit.